The primary structure comprises 669 residues: Exostosin-like 1 (669 aa).

Residues 1–8 (MLWRRKSF) lie on the Cytoplasmic side of the membrane. The chain crosses the membrane as a helical; Signal-anchor for type II membrane protein span at residues 9–29 (WLALSAFWLLLVLLGVFPLRL). The Lumenal portion of the chain corresponds to 30-669 (AVLPGPLPGR…RKKYRSLEKP (640 aa)). Residues Asn-263 and Asn-480 are each glycosylated (N-linked (GlcNAc...) asparagine). Cys-577 and Cys-627 are joined by a disulfide. A disordered region spans residues 601-621 (RQHPEAVPMDSGDPRPVPEPQ).

Belongs to the glycosyltransferase 47 family.

The protein resides in the endoplasmic reticulum membrane. The enzyme catalyses 3-O-{[(1-&gt;4)-beta-D-GlcA-(1-&gt;4)-alpha-D-GlcNAc](n)-(1-&gt;4)-beta-D-GlcA-(1-&gt;3)-beta-D-Gal-(1-&gt;3)-beta-D-Gal-(1-&gt;4)-beta-D-Xyl}-L-seryl-[protein] + UDP-N-acetyl-alpha-D-glucosamine = 3-O-{alpha-D-GlcNAc-[(1-&gt;4)-beta-D-GlcA-(1-&gt;4)-alpha-D-GlcNAc](n)-(1-&gt;4)-beta-D-GlcA-(1-&gt;3)-beta-D-Gal-(1-&gt;3)-beta-D-Gal-(1-&gt;4)-beta-D-Xyl}-L-seryl-[protein] + UDP + H(+). It functions in the pathway protein modification; protein glycosylation. In terms of biological role, glycosyltransferase required for the biosynthesis of heparan-sulfate (HS). Transfers N-acetyl-alpha-D-glucosamine to the nascent HS chain (GlcNAcT-II activity). Appears to lack GlcNAcT I and GlcAT-II activities. The chain is Exostosin-like 1 (Extl1) from Mus musculus (Mouse).